The primary structure comprises 567 residues: Urease subunit alpha (567 aa).

Residues 129–567 form the Urease domain; sequence GGIDTHIHWI…LPMAQRYFLF (439 aa). Residues histidine 134, histidine 136, and lysine 217 each contribute to the Ni(2+) site. Lysine 217 is subject to N6-carboxylysine. Histidine 219 serves as a coordination point for substrate. Ni(2+) is bound by residues histidine 246 and histidine 272. Histidine 320 (proton donor) is an active-site residue. Aspartate 360 provides a ligand contact to Ni(2+).

Belongs to the metallo-dependent hydrolases superfamily. Urease alpha subunit family. In terms of assembly, heterotrimer of UreA (gamma), UreB (beta) and UreC (alpha) subunits. Three heterotrimers associate to form the active enzyme. The cofactor is Ni cation. Carboxylation allows a single lysine to coordinate two nickel ions.

It localises to the cytoplasm. It catalyses the reaction urea + 2 H2O + H(+) = hydrogencarbonate + 2 NH4(+). It functions in the pathway nitrogen metabolism; urea degradation; CO(2) and NH(3) from urea (urease route): step 1/1. The chain is Urease subunit alpha from Enterobacter sp. (strain 638).